Consider the following 206-residue polypeptide: Small ribosomal subunit protein uS4 (206 aa).

One can recognise an S4 RNA-binding domain in the interval 96-158; sequence SRLDNVVYRM…AKKQLRIQNA (63 aa).

This sequence belongs to the universal ribosomal protein uS4 family. In terms of assembly, part of the 30S ribosomal subunit. Contacts protein S5. The interaction surface between S4 and S5 is involved in control of translational fidelity.

Its function is as follows. One of the primary rRNA binding proteins, it binds directly to 16S rRNA where it nucleates assembly of the body of the 30S subunit. Functionally, with S5 and S12 plays an important role in translational accuracy. This chain is Small ribosomal subunit protein uS4, found in Francisella tularensis subsp. mediasiatica (strain FSC147).